Here is a 382-residue protein sequence, read N- to C-terminus: Succinate--CoA ligase [ADP-forming] subunit beta 1 (382 aa).

The ATP-grasp domain occupies 9-235; that stretch reads KQIFAKHGIR…ATEEDPLERE (227 aa). Residues Lys45, 52-54, Glu91, Leu94, and Glu99 contribute to the ATP site; that span reads GRG. Mg(2+)-binding residues include Asn191 and Asp204. Residue Asn255 coordinates substrate.

It belongs to the succinate/malate CoA ligase beta subunit family. Heterotetramer of two alpha and two beta subunits. It depends on Mg(2+) as a cofactor.

It catalyses the reaction succinate + ATP + CoA = succinyl-CoA + ADP + phosphate. The catalysed reaction is GTP + succinate + CoA = succinyl-CoA + GDP + phosphate. It functions in the pathway carbohydrate metabolism; tricarboxylic acid cycle; succinate from succinyl-CoA (ligase route): step 1/1. Succinyl-CoA synthetase functions in the citric acid cycle (TCA), coupling the hydrolysis of succinyl-CoA to the synthesis of either ATP or GTP and thus represents the only step of substrate-level phosphorylation in the TCA. The beta subunit provides nucleotide specificity of the enzyme and binds the substrate succinate, while the binding sites for coenzyme A and phosphate are found in the alpha subunit. This is Succinate--CoA ligase [ADP-forming] subunit beta 1 from Archaeoglobus fulgidus (strain ATCC 49558 / DSM 4304 / JCM 9628 / NBRC 100126 / VC-16).